Consider the following 320-residue polypeptide: Malate dehydrogenase (320 aa).

Residues 10 to 15 (GAGNIG) and aspartate 34 contribute to the NAD(+) site. Arginine 83 and arginine 89 together coordinate substrate. Residues asparagine 96 and 119–121 (ITN) contribute to the NAD(+) site. Substrate contacts are provided by asparagine 121 and arginine 152. Residue histidine 176 is the Proton acceptor of the active site.

It belongs to the LDH/MDH superfamily. MDH type 3 family.

The catalysed reaction is (S)-malate + NAD(+) = oxaloacetate + NADH + H(+). Its function is as follows. Catalyzes the reversible oxidation of malate to oxaloacetate. The polypeptide is Malate dehydrogenase (Novosphingobium aromaticivorans (strain ATCC 700278 / DSM 12444 / CCUG 56034 / CIP 105152 / NBRC 16084 / F199)).